A 470-amino-acid chain; its full sequence is Proline--tRNA ligase (470 aa).

Belongs to the class-II aminoacyl-tRNA synthetase family. ProS type 3 subfamily. In terms of assembly, homodimer.

It is found in the cytoplasm. The enzyme catalyses tRNA(Pro) + L-proline + ATP = L-prolyl-tRNA(Pro) + AMP + diphosphate. Catalyzes the attachment of proline to tRNA(Pro) in a two-step reaction: proline is first activated by ATP to form Pro-AMP and then transferred to the acceptor end of tRNA(Pro). The polypeptide is Proline--tRNA ligase (Malacoplasma penetrans (strain HF-2) (Mycoplasma penetrans)).